The following is a 199-amino-acid chain: CASP-like protein 1B2 (199 aa).

The Cytoplasmic portion of the chain corresponds to Met-1–Lys-22. A helical membrane pass occupies residues Trp-23–Met-43. The Extracellular segment spans residues Gly-44 to Pro-74. The chain crosses the membrane as a helical span at residues Ala-75–Met-95. The Cytoplasmic segment spans residues Gly-96–Met-112. A helical membrane pass occupies residues Ile-113–Phe-133. Residues Met-134 to Gly-163 are Extracellular-facing. A helical membrane pass occupies residues Ala-164–Ile-184. Over Lys-185–Pro-199 the chain is Cytoplasmic.

It belongs to the Casparian strip membrane proteins (CASP) family. As to quaternary structure, homodimer and heterodimers.

It is found in the cell membrane. The chain is CASP-like protein 1B2 from Populus trichocarpa (Western balsam poplar).